The chain runs to 348 residues: Dihydroorotase (348 aa).

Zn(2+) is bound by residues histidine 17 and histidine 19. Substrate contacts are provided by residues 19 to 21 (HLR) and asparagine 45. Zn(2+) is bound by residues lysine 103, histidine 140, and histidine 178. The residue at position 103 (lysine 103) is an N6-carboxylysine. Residue histidine 140 participates in substrate binding. Leucine 223 lines the substrate pocket. Aspartate 251 is a Zn(2+) binding site. Aspartate 251 is a catalytic residue. The substrate site is built by histidine 255 and alanine 267.

The protein belongs to the metallo-dependent hydrolases superfamily. DHOase family. Class II DHOase subfamily. In terms of assembly, homodimer. Zn(2+) is required as a cofactor.

The catalysed reaction is (S)-dihydroorotate + H2O = N-carbamoyl-L-aspartate + H(+). It participates in pyrimidine metabolism; UMP biosynthesis via de novo pathway; (S)-dihydroorotate from bicarbonate: step 3/3. Functionally, catalyzes the reversible cyclization of carbamoyl aspartate to dihydroorotate. This chain is Dihydroorotase, found in Salmonella newport (strain SL254).